The chain runs to 438 residues: MPISKIHARSVYDSRGNPTVEVDVVTETGLHRAIVPSGASTGQHEAHELRDGDKSKWLGKGVLTAVKNVNETIGPAVIKENLDVKEQSKIDEFLNKLDGTPNKSNLGANAILGVSLAIAKAGAAEKGVPLYAHISDLAGTKKPYVLPVPFQNVLNGGSHAGGRLAFQEFMIVPDTASSFSEGLRQGAEVYHKLKALAKKKYGQSAGNVGDEGGVAPDIQTAEEALDLITEAIEQAGYTGKIHIAMDVASSEFYKPEEKKYDLDFKNPDSDPSKWLTYEQLADLYKSLAAKYPIVSIEDPFAEDDWEAWSYFYKTSDFQIVGDDLTVTNPLRIKKAIELKSCNALLLKVNQIGTLTESIQAAKDSYADGWGVMVSHRSGETEDVTIADISVGLRSGQIKTGAPARSERLAKLNQILRIEEELGENAVYAGQNFRKSVNL.

Positions 159 and 168 each coordinate substrate. The Proton donor role is filled by E211. 3 residues coordinate Mg(2+): D246, E297, and D322. Residues E297 and D322 each coordinate substrate. The active-site Proton acceptor is K347. Substrate-binding positions include 374–377 (SHRS) and K398.

This sequence belongs to the enolase family. Homodimer. Requires Mg(2+) as cofactor.

The protein resides in the cytoplasm. The enzyme catalyses (2R)-2-phosphoglycerate = phosphoenolpyruvate + H2O. The protein operates within carbohydrate degradation; glycolysis; pyruvate from D-glyceraldehyde 3-phosphate: step 4/5. In terms of biological role, involved in osmoadaptation. The polypeptide is Enolase (enoA) (Emericella nidulans (strain FGSC A4 / ATCC 38163 / CBS 112.46 / NRRL 194 / M139) (Aspergillus nidulans)).